The chain runs to 605 residues: Lysophospholipase 1 (605 aa).

A signal peptide spans Met-1 to Ala-17. A PLA2c domain is found at Ser-30–Tyr-565. Asn-199, Asn-261, Asn-399, Asn-451, Asn-465, Asn-492, and Asn-573 each carry an N-linked (GlcNAc...) asparagine glycan.

Belongs to the lysophospholipase family.

Its subcellular location is the secreted. It catalyses the reaction a 1-acyl-sn-glycero-3-phosphocholine + H2O = sn-glycerol 3-phosphocholine + a fatty acid + H(+). Its function is as follows. Catalyzes the release of fatty acids from lysophospholipids. Phospholipase B may well contribute to pathogenicity by abetting the fungus in damaging and traversing host cell membranes, processes which likely increase the rapidity of disseminated infection. The polypeptide is Lysophospholipase 1 (Candida albicans (strain SC5314 / ATCC MYA-2876) (Yeast)).